The following is a 201-amino-acid chain: Ribosomal RNA large subunit methyltransferase E (201 aa).

Gly49, Trp51, Asp69, Asp90, and Asp113 together coordinate S-adenosyl-L-methionine. Lys153 (proton acceptor) is an active-site residue.

It belongs to the class I-like SAM-binding methyltransferase superfamily. RNA methyltransferase RlmE family.

Its subcellular location is the cytoplasm. It carries out the reaction uridine(2552) in 23S rRNA + S-adenosyl-L-methionine = 2'-O-methyluridine(2552) in 23S rRNA + S-adenosyl-L-homocysteine + H(+). Specifically methylates the uridine in position 2552 of 23S rRNA at the 2'-O position of the ribose in the fully assembled 50S ribosomal subunit. This chain is Ribosomal RNA large subunit methyltransferase E, found in Desulfotalea psychrophila (strain LSv54 / DSM 12343).